The following is a 171-amino-acid chain: MPLLDSFRVDHTIMPAPAVRVAKVMQTPKGDDITVFDLRFCVPNKSMMSEKGTHTLEHLFAGFIRNHLNSPTVEIIDVSPMGCRTGFYMSLIGTPSEQEVAVAWKKAMEDVLKVENQSDIPELNLYQCGTCAMHSLDEAKDIARDILKSQIGVMSNKELYLSEEKLKSLGN.

Fe cation contacts are provided by H54, H58, and C128.

Belongs to the LuxS family. In terms of assembly, homodimer. Requires Fe cation as cofactor.

It carries out the reaction S-(5-deoxy-D-ribos-5-yl)-L-homocysteine = (S)-4,5-dihydroxypentane-2,3-dione + L-homocysteine. Its function is as follows. Involved in the synthesis of autoinducer 2 (AI-2) which is secreted by bacteria and is used to communicate both the cell density and the metabolic potential of the environment. The regulation of gene expression in response to changes in cell density is called quorum sensing. Catalyzes the transformation of S-ribosylhomocysteine (RHC) to homocysteine (HC) and 4,5-dihydroxy-2,3-pentadione (DPD). The polypeptide is S-ribosylhomocysteine lyase (Aliarcobacter butzleri (strain RM4018) (Arcobacter butzleri)).